Here is a 169-residue protein sequence, read N- to C-terminus: Myosin regulatory light chain 11 (169 aa).

The residue at position 2 (Ala-2) is a N,N,N-trimethylalanine. Phosphoserine occurs at positions 15 and 16. Residues Thr-25 and Thr-35 each carry the phosphothreonine modification. Residues 25–60 (TQIQEFKEAFTVIDQNRDGIIDKEDLRDTFAAMGRL) enclose the EF-hand 1 domain. Ca(2+)-binding residues include Asp-38, Asn-40, Asp-42, and Asp-49. Ser-75 carries the post-translational modification Phosphoserine. EF-hand domains follow at residues 95–130 (DPED…QCDR) and 131–166 (FSQE…GDAK). Thr-101 carries the phosphothreonine modification.

As to quaternary structure, myosin is a hexamer of 2 heavy chains and 4 light chains. In terms of tissue distribution, expressed in fetal and adult skeletal muscle.

Its function is as follows. Myosin regulatory subunit that plays an essential role to maintain muscle integrity during early development. Plays a role in muscle contraction. The protein is Myosin regulatory light chain 11 of Homo sapiens (Human).